A 124-amino-acid chain; its full sequence is Large ribosomal subunit protein eL31 (124 aa).

This sequence belongs to the eukaryotic ribosomal protein eL31 family.

The sequence is that of Large ribosomal subunit protein eL31 (RpL31) from Aedes aegypti (Yellowfever mosquito).